The chain runs to 631 residues: MSTTKLTRREQREHAQRFIDTLAGTAFPNSRRIYVHGSQADIRVPMREIQLSPTLVGGDKDKPRYETNEPIPVYDTSGPYGDPDISIDVRQGLAKLRQPWIDARNDCAPLSERSSAYTKARLADDGLDELRFSGLLTPKRAVAGKCVTQLHYARQGIVTPEMEFIAIRENMGRERIRSEVLRQQHAGEGFGAHLPENITPEFVRDEVAAGRAIIPANINHPESEPMIIGRNFLVKVNANIGNSAVTSSIEEEVEKLVWSTRWGADTVMDLSTGRYIHETREWILRNSPVPIGTVPIYQALEKVNGIAENLTWQVFRDTLLEQAEQGVDYFTIHAGVLLRYVPMTAKRLTGIVSRGGSIMAKWCLSHHQENFLYQHFREICEICAAYDVSLSLGDGLRPGSIQDANDEAQFSELRTLGELTKIAWEYDVQVMIEGPGHVPMQMIRRNMTEQLEHCHEAPFYTLGPLTTDIAPGYDHFTSGIGAAMIGWFGCAMLCYVTPKEHLGLPNKEDVKQGLITYKIAAHAADLAKGHPGAQIRDNAMSKARFEFRWEDQFNLALDPFTARAYHDETLPQESGKVAHFCSMCGPKFCSMKITQEVRDYAAKQSIEAGMADMSNNFRARGGEIYLKQEEA.

The tract at residues 54-80 is disordered; sequence TLVGGDKDKPRYETNEPIPVYDTSGPY. Residues 58 to 67 are compositionally biased toward basic and acidic residues; it reads GDKDKPRYET. Substrate is bound by residues N239, M268, Y297, H333, 353–355, 394–397, and E433; these read SRG and DGLR. Position 437 (H437) interacts with Zn(2+). Y460 contributes to the substrate binding site. Position 501 (H501) interacts with Zn(2+). [4Fe-4S] cluster is bound by residues C581, C584, and C589.

The protein belongs to the ThiC family. In terms of assembly, homodimer. [4Fe-4S] cluster serves as cofactor.

It catalyses the reaction 5-amino-1-(5-phospho-beta-D-ribosyl)imidazole + S-adenosyl-L-methionine = 4-amino-2-methyl-5-(phosphooxymethyl)pyrimidine + CO + 5'-deoxyadenosine + formate + L-methionine + 3 H(+). It functions in the pathway cofactor biosynthesis; thiamine diphosphate biosynthesis. Its function is as follows. Catalyzes the synthesis of the hydroxymethylpyrimidine phosphate (HMP-P) moiety of thiamine from aminoimidazole ribotide (AIR) in a radical S-adenosyl-L-methionine (SAM)-dependent reaction. In Klebsiella pneumoniae subsp. pneumoniae (strain ATCC 700721 / MGH 78578), this protein is Phosphomethylpyrimidine synthase.